A 338-amino-acid chain; its full sequence is Galaxin (338 aa).

The signal sequence occupies residues 1–23; the sequence is MKPSGAFLSLCVVLLSLATHCFS. Positions 30 to 47 are enriched in basic and acidic residues; sequence RRDAHSDTNALKSRDRRQ. The tract at residues 30–50 is disordered; sequence RRDAHSDTNALKSRDRRQAPA.

Component of the acid-insoluble organic matrix of the aragonitic skeleton (at protein level). Initially, expressed in an aboral submarginal ring and then along calcifying septa.

It is found in the secreted. This Acropora millepora (Staghorn coral) protein is Galaxin.